Here is a 780-residue protein sequence, read N- to C-terminus: Protein SEY1 (780 aa).

Topologically, residues 1–680 (MDSKEEAIQL…KRSMIKTTTH (680 aa)) are cytoplasmic. The GB1/RHD3-type G domain maps to 35–265 (GVNYHVISVF…NEDYYFKPEY (231 aa)). 45-52 (GSQSSGKS) contacts GTP. A coiled-coil region spans residues 440–463 (EVKEEVVKRFENDLKETSDKLRVT). A helical transmembrane segment spans residues 681–701 (IPLWIYAIIVVLGWNEFMMVI). The Lumenal segment spans residues 702-704 (RNP). Residues 705–725 (LFVTLTILILVSFYFINKFDL) traverse the membrane as a helical segment. At 726–780 (WGPVKSVAQTAAGETIGTIKTKLRDFVLEEHEKTPKIQSEKSNSDSEKVVENEKS) the chain is on the cytoplasmic side. The tract at residues 756–780 (HEKTPKIQSEKSNSDSEKVVENEKS) is disordered.

The protein belongs to the TRAFAC class dynamin-like GTPase superfamily. GB1/RHD3 GTPase family. RHD3 subfamily.

It localises to the endoplasmic reticulum membrane. Cooperates with the reticulon proteins and tubule-shaping DP1 family proteins to generate and maintain the structure of the tubular endoplasmic reticulum network. Has GTPase activity, which is required for its function in ER organization. This is Protein SEY1 from Vanderwaltozyma polyspora (strain ATCC 22028 / DSM 70294 / BCRC 21397 / CBS 2163 / NBRC 10782 / NRRL Y-8283 / UCD 57-17) (Kluyveromyces polysporus).